Consider the following 202-residue polypeptide: Tetranectin (202 aa).

The first 21 residues, 1 to 21 (MELWGPCVLLCLFSLLTQVTA), serve as a signal peptide directing secretion. Disulfide bonds link C71-C81, C98-C197, and C173-C189. Positions 77 to 198 (VHMKCFLAFV…CRDKLPYVCQ (122 aa)) constitute a C-type lectin domain.

In terms of assembly, homotrimer.

The protein resides in the secreted. Tetranectin binds to plasminogen and to isolated kringle 4. May be involved in the packaging of molecules destined for exocytosis. Plays a role in retinal function. The protein is Tetranectin (CLEC3B) of Bos taurus (Bovine).